The following is a 359-amino-acid chain: Pyruvate dehydrogenase E1 component subunit beta, mitochondrial (359 aa).

The N-terminal 30 residues, 1 to 30, are a transit peptide targeting the mitochondrion; that stretch reads MAVVAVLVRKPLEQVSGLLRRRFHRTAPAA. Tyr-67 bears the Phosphotyrosine mark. Glu-89 is a thiamine diphosphate binding site. Residues Ile-142, Ala-190, Ile-191, Asp-193, and Asn-195 each coordinate K(+). The residue at position 354 (Lys-354) is an N6-acetyllysine.

Heterotetramer of two PDHA1 and two PDHB subunits. The heterotetramer interacts with DLAT, and is part of the multimeric pyruvate dehydrogenase complex that contains multiple copies of pyruvate dehydrogenase (E1), dihydrolipoamide acetyltransferase (DLAT, E2) and lipoamide dehydrogenase (DLD, E3). These subunits are bound to an inner core composed of about 48 DLAT and 12 PDHX molecules. Interacts with DLAT. It depends on thiamine diphosphate as a cofactor.

Its subcellular location is the mitochondrion matrix. The enzyme catalyses N(6)-[(R)-lipoyl]-L-lysyl-[protein] + pyruvate + H(+) = N(6)-[(R)-S(8)-acetyldihydrolipoyl]-L-lysyl-[protein] + CO2. Functionally, the pyruvate dehydrogenase complex catalyzes the overall conversion of pyruvate to acetyl-CoA and CO(2), and thereby links the glycolytic pathway to the tricarboxylic cycle. In Bos taurus (Bovine), this protein is Pyruvate dehydrogenase E1 component subunit beta, mitochondrial (PDHB).